The chain runs to 170 residues: MDRSQKAESVAFLNGVFAEAGAVVITRNLGMTVAQSTALRTKIREAGATYKVAKNSLAKLAVAGTDYEGLVDLFTGPTAIAASADPVAAAKAVVEFAKTTDKIEIVGGAMGSQVLNEAGVRALASMPSLDELRGTLIGLIQAPATKIAQLTTAPAAKLARVFGAYAKEAA.

The protein belongs to the universal ribosomal protein uL10 family. As to quaternary structure, part of the ribosomal stalk of the 50S ribosomal subunit. The N-terminus interacts with L11 and the large rRNA to form the base of the stalk. The C-terminus forms an elongated spine to which L12 dimers bind in a sequential fashion forming a multimeric L10(L12)X complex.

Forms part of the ribosomal stalk, playing a central role in the interaction of the ribosome with GTP-bound translation factors. The protein is Large ribosomal subunit protein uL10 of Novosphingobium aromaticivorans (strain ATCC 700278 / DSM 12444 / CCUG 56034 / CIP 105152 / NBRC 16084 / F199).